The following is a 305-amino-acid chain: uncharacterized protein (305 aa).

10 helical membrane-spanning segments follow: residues 4–24 (LNIY…FNLA), 38–58 (AWRF…TEGI), 67–87 (AVSY…LFFV), 95–115 (VNGA…ARII), 125–145 (VLGI…GSIE), 152–172 (ISGG…YGVL), 183–203 (LSTT…VSLF), 215–235 (IGVW…GYLW), 250–270 (LFFN…GTPI), and 272–292 (VFQV…SGVI). EamA domains are found at residues 15-140 (IFTG…LVIT) and 164-290 (VCWA…TASG).

The protein belongs to the EamA transporter family.

It is found in the cell membrane. This is an uncharacterized protein from Bacillus subtilis (strain 168).